A 497-amino-acid polypeptide reads, in one-letter code: Bypass of stop codon protein 6 (497 aa).

The Lumenal segment spans residues 1 to 72 (MDASSVPPKV…KVKTYPLNYQ (72 aa)). A phosphoserine mark is found at serine 37 and serine 41. Asparagine 49 carries N-linked (GlcNAc...) asparagine glycosylation. The helical transmembrane segment at 73–93 (TVPLVKLQVIACLIMFVVFGM) threads the bilayer. The Cytoplasmic portion of the chain corresponds to 94–144 (NDQTVGALLPTLIEYYHISRVDVSNVFIVQLCGYVMASLSKERLNKHFGMR). A helical membrane pass occupies residues 145–165 (GGMLLAAGLCIVFLIILATAP). The Lumenal portion of the chain corresponds to 166–167 (SS). Residues 168-188 (FYVCMFCGLPLGLGIGILDST) form a helical membrane-spanning segment. The Cytoplasmic segment spans residues 189–205 (GNVLMGSLLVHKNELMG). A helical transmembrane segment spans residues 206 to 226 (IMHGLYGAAAMVTPPLVSYFV). The Lumenal segment spans residues 227–232 (EWGHWS). Residues 233–253 (LFFLIPLFFSIIGMIVIFPAF) form a helical membrane-spanning segment. Over 254–300 (KFETASKYDYLCSVENKESNNDVEEAGDNSLMESTKASPGFFELLRN) the chain is Cytoplasmic. The helical transmembrane segment at 301 to 321 (PAIFLYSLYLFLYLGAEITTG) threads the bilayer. Topologically, residues 322 to 340 (SWFFSYLLETKSSNKVAMS) are lumenal. Residues 341–361 (YIAASFWTGLTVGRLCLGFVT) form a helical membrane-spanning segment. The Cytoplasmic segment spans residues 362–373 (ERFFENEYKASK). A helical membrane pass occupies residues 374–394 (AYAFLTLSSYTLFVLVGLINS). Residues 395-397 (SSV) lie on the Lumenal side of the membrane. Residues 398 to 418 (FYFVVLFFVVFCCGTFIGPLF) traverse the membrane as a helical segment. Residues 419-439 (PNASIVALQVLPKRLHVSGVG) lie on the Cytoplasmic side of the membrane. A helical transmembrane segment spans residues 440 to 460 (VAVAVGGCGGAAIPYLAGVIA). Residues 461-462 (HT) are Lumenal-facing. The chain crosses the membrane as a helical span at residues 463 to 483 (VGIQYIPLLCWIMVALFTLEW). Residues 484-497 (TLYPKFIKGHEEYF) are Cytoplasmic-facing.

Belongs to the major facilitator superfamily.

Its subcellular location is the golgi apparatus. The protein resides in the cis-Golgi network membrane. Probable transporter. The sequence is that of Bypass of stop codon protein 6 (BSC6) from Saccharomyces cerevisiae (strain ATCC 204508 / S288c) (Baker's yeast).